The primary structure comprises 88 residues: Protein LE25 (88 aa).

The tract at residues M1–F88 is disordered. Residues G14–E65 are compositionally biased toward basic and acidic residues.

The protein belongs to the LEA type 1 family. As to expression, accumulates in developing seeds and drought-stressed leaves.

This chain is Protein LE25 (LE25), found in Solanum lycopersicum (Tomato).